Here is a 458-residue protein sequence, read N- to C-terminus: UDP-N-acetylmuramoylalanine--D-glutamate ligase (458 aa).

ATP is bound at residue 119-125 (GSNGKTT).

It belongs to the MurCDEF family.

It localises to the cytoplasm. The catalysed reaction is UDP-N-acetyl-alpha-D-muramoyl-L-alanine + D-glutamate + ATP = UDP-N-acetyl-alpha-D-muramoyl-L-alanyl-D-glutamate + ADP + phosphate + H(+). It functions in the pathway cell wall biogenesis; peptidoglycan biosynthesis. In terms of biological role, cell wall formation. Catalyzes the addition of glutamate to the nucleotide precursor UDP-N-acetylmuramoyl-L-alanine (UMA). In Limosilactobacillus fermentum (strain NBRC 3956 / LMG 18251) (Lactobacillus fermentum), this protein is UDP-N-acetylmuramoylalanine--D-glutamate ligase.